The primary structure comprises 92 residues: MARSLKKNPFVANHLLRKIKNLNIKKEKKIIVTWSRASVIVPAMIGHTIAVHNGREHLPIYVTDRMVDHKLGEFAPTLLFQGHARNDKKSRR.

The protein belongs to the universal ribosomal protein uS19 family.

The protein resides in the plastid. It is found in the chloroplast. Its function is as follows. Protein S19 forms a complex with S13 that binds strongly to the 16S ribosomal RNA. The protein is Small ribosomal subunit protein uS19c of Pinus koraiensis (Korean pine).